A 393-amino-acid polypeptide reads, in one-letter code: NAD(P)H-quinone oxidoreductase subunit H, chloroplastic (393 aa).

Belongs to the complex I 49 kDa subunit family. In terms of assembly, NDH is composed of at least 16 different subunits, 5 of which are encoded in the nucleus.

The protein localises to the plastid. It localises to the chloroplast thylakoid membrane. The enzyme catalyses a plastoquinone + NADH + (n+1) H(+)(in) = a plastoquinol + NAD(+) + n H(+)(out). It carries out the reaction a plastoquinone + NADPH + (n+1) H(+)(in) = a plastoquinol + NADP(+) + n H(+)(out). NDH shuttles electrons from NAD(P)H:plastoquinone, via FMN and iron-sulfur (Fe-S) centers, to quinones in the photosynthetic chain and possibly in a chloroplast respiratory chain. The immediate electron acceptor for the enzyme in this species is believed to be plastoquinone. Couples the redox reaction to proton translocation, and thus conserves the redox energy in a proton gradient. The chain is NAD(P)H-quinone oxidoreductase subunit H, chloroplastic from Manihot esculenta (Cassava).